The following is a 153-amino-acid chain: Neuromedin-S (153 aa).

A signal peptide spans 1 to 26 (MKHPLPHYSPILFIYCFCMLQIPSSG). 3 consecutive propeptides follow at residues 27-69 (ASPP…VYKR), 70-105 (FLFH…ASRR), and 106-108 (MKR). Residue Asn-144 is modified to Asparagine amide. A propeptide spanning residues 147–153 (YTDNNFQ) is cleaved from the precursor.

This sequence belongs to the NmU family.

The protein localises to the secreted. Functionally, implicated in the regulation of circadian rhythms through autocrine and/or paracrine actions. The chain is Neuromedin-S (Nms) from Mus musculus (Mouse).